The primary structure comprises 458 residues: Alpha-2C adrenergic receptor (458 aa).

Topologically, residues 1–51 are extracellular; it reads MASPALAAALAAAAAEGPNGSDAGEWGSGGGANASGTDWGPPPGQYSAGAV. N-linked (GlcNAc...) asparagine glycans are attached at residues Asn19 and Asn33. A helical membrane pass occupies residues 52-76; it reads AGLAAVVGFLIVFTVVGNVLVVIAV. The Cytoplasmic segment spans residues 77 to 88; it reads LTSRALRAPQNL. Residues 89 to 114 traverse the membrane as a helical segment; it reads FLVSLASADILVATLVMPFSLANELM. Residues 115–124 are Extracellular-facing; that stretch reads AYWYFGQVWC. Cys124 and Cys202 are disulfide-bonded. Residues 125–147 traverse the membrane as a helical segment; it reads GVYLALDVLFCTSSIVHLCAISL. At 148–168 the chain is on the cytoplasmic side; the sequence is DRYWSVTQAVEYNLKRTPRRV. A helical membrane pass occupies residues 169-191; it reads KATIVAVWLISAVISFPPLVSFY. Topologically, residues 192 to 207 are extracellular; it reads RRPDGAAYPQCGLNDE. A helical transmembrane segment spans residues 208 to 231; it reads TWYILSSCIGSFFAPCLIMGLVYA. Residues 232 to 379 lie on the Cytoplasmic side of the membrane; sequence RIYRVAKLRT…QAREKRFTFV (148 aa). Positions 245–343 are disordered; that stretch reads SEKRGPAGPD…SPGPGGRLSR (99 aa). Residues 291 to 303 are compositionally biased toward basic residues; sequence RRRRRGALRRGGR. A helical transmembrane segment spans residues 380–403; sequence LAVVMGVFVLCWFPFFFSYSLYGI. Over 404–416 the chain is Extracellular; that stretch reads CREACQLPEPLFK. Residues 417–437 traverse the membrane as a helical segment; the sequence is FFFWIGYCNSSLNPVIYTVFN. Topologically, residues 438–458 are cytoplasmic; that stretch reads QDFRRSFKHILFRRRRRGFRQ.

Belongs to the G-protein coupled receptor 1 family. Adrenergic receptor subfamily. ADRA2C sub-subfamily.

It localises to the cell membrane. Functionally, alpha-2 adrenergic receptors mediate the catecholamine-induced inhibition of adenylate cyclase through the action of G proteins. This chain is Alpha-2C adrenergic receptor (Adra2c), found in Rattus norvegicus (Rat).